The chain runs to 596 residues: tRNA(Met) cytidine acetyltransferase TmcA (596 aa).

ATP contacts are provided by residues glutamine 138, 160 to 169, and arginine 285; that span reads GRGKSTLAGK. The 154-residue stretch at 328–481 folds into the N-acetyltransferase domain; the sequence is SDLRRLFDAQ…SGYHSAMMLY (154 aa). Acetyl-CoA-binding positions include 406–408 and 413–419; these read IAV and QKQGIGK.

The protein belongs to the RNA cytidine acetyltransferase family. TmcA subfamily.

It is found in the cytoplasm. The enzyme catalyses cytidine(34) in elongator tRNA(Met) + acetyl-CoA + ATP + H2O = N(4)-acetylcytidine(34) in elongator tRNA(Met) + ADP + phosphate + CoA + H(+). Catalyzes the formation of N(4)-acetylcytidine (ac(4)C) at the wobble position of tRNA(Met), by using acetyl-CoA as an acetyl donor and ATP (or GTP). In Actinobacillus pleuropneumoniae serotype 5b (strain L20), this protein is tRNA(Met) cytidine acetyltransferase TmcA.